Reading from the N-terminus, the 494-residue chain is Aspartyl/glutamyl-tRNA(Asn/Gln) amidotransferase subunit B (494 aa).

It belongs to the GatB/GatE family. GatB subfamily. Heterotrimer of A, B and C subunits.

The enzyme catalyses L-glutamyl-tRNA(Gln) + L-glutamine + ATP + H2O = L-glutaminyl-tRNA(Gln) + L-glutamate + ADP + phosphate + H(+). It carries out the reaction L-aspartyl-tRNA(Asn) + L-glutamine + ATP + H2O = L-asparaginyl-tRNA(Asn) + L-glutamate + ADP + phosphate + 2 H(+). Allows the formation of correctly charged Asn-tRNA(Asn) or Gln-tRNA(Gln) through the transamidation of misacylated Asp-tRNA(Asn) or Glu-tRNA(Gln) in organisms which lack either or both of asparaginyl-tRNA or glutaminyl-tRNA synthetases. The reaction takes place in the presence of glutamine and ATP through an activated phospho-Asp-tRNA(Asn) or phospho-Glu-tRNA(Gln). This Rhodopseudomonas palustris (strain ATCC BAA-98 / CGA009) protein is Aspartyl/glutamyl-tRNA(Asn/Gln) amidotransferase subunit B.